We begin with the raw amino-acid sequence, 116 residues long: UPF0329 protein ECU05_1650 (116 aa).

The protein belongs to the UPF0329 family.

This is UPF0329 protein ECU05_1650 from Encephalitozoon cuniculi (strain GB-M1) (Microsporidian parasite).